The chain runs to 181 residues: MPLIIGIDPGSRLTGYGIIEKNGNELRFIDAGTIRTESQDMPERLKRIFAGVERIVKFHGPTQAAVEQVFMAQNPDSALKLGQARGAAIAALVNLDLEVAEYTARQIKQSVVGYGAADKEQVQMMVMRILNLTIKPQSDAADALAAAICHAHASGSMSKMAVLNALGGMARGRSRSSTRRR.

Active-site residues include Asp-8, Glu-67, and Asp-139. Residues Asp-8, Glu-67, and Asp-139 each contribute to the Mg(2+) site.

This sequence belongs to the RuvC family. In terms of assembly, homodimer which binds Holliday junction (HJ) DNA. The HJ becomes 2-fold symmetrical on binding to RuvC with unstacked arms; it has a different conformation from HJ DNA in complex with RuvA. In the full resolvosome a probable DNA-RuvA(4)-RuvB(12)-RuvC(2) complex forms which resolves the HJ. Mg(2+) is required as a cofactor.

It localises to the cytoplasm. It carries out the reaction Endonucleolytic cleavage at a junction such as a reciprocal single-stranded crossover between two homologous DNA duplexes (Holliday junction).. The RuvA-RuvB-RuvC complex processes Holliday junction (HJ) DNA during genetic recombination and DNA repair. Endonuclease that resolves HJ intermediates. Cleaves cruciform DNA by making single-stranded nicks across the HJ at symmetrical positions within the homologous arms, yielding a 5'-phosphate and a 3'-hydroxyl group; requires a central core of homology in the junction. The consensus cleavage sequence is 5'-(A/T)TT(C/G)-3'. Cleavage occurs on the 3'-side of the TT dinucleotide at the point of strand exchange. HJ branch migration catalyzed by RuvA-RuvB allows RuvC to scan DNA until it finds its consensus sequence, where it cleaves and resolves the cruciform DNA. This Acinetobacter baylyi (strain ATCC 33305 / BD413 / ADP1) protein is Crossover junction endodeoxyribonuclease RuvC.